The primary structure comprises 442 residues: ATP-dependent RNA helicase SUB2-2 (442 aa).

The short motif at 58–86 (TGFKDFLLKPELARAIIDCGFEHPSEVQQ) is the Q motif element. The Helicase ATP-binding domain maps to 89–264 (IPQSIHGTDV…RRFLQNPLEI (176 aa)). 102–109 (AKSGLGKT) lines the ATP pocket. Positions 211 to 214 (DECD) match the DECD box motif. The region spanning 292–437 (KLAQLLDDLE…EFPEEGIDPS (146 aa)) is the Helicase C-terminal domain.

It belongs to the DEAD box helicase family. DECD subfamily.

Its subcellular location is the nucleus. It carries out the reaction ATP + H2O = ADP + phosphate + H(+). Functionally, ATP-binding RNA helicase involved in transcription elongation and required for the export of mRNA out of the nucleus. SUB2 also plays a role in pre-mRNA splicing and spliceosome assembly. May be involved in rDNA and telomeric silencing, and maintenance of genome integrity. This chain is ATP-dependent RNA helicase SUB2-2 (SUB2-2), found in Vanderwaltozyma polyspora (strain ATCC 22028 / DSM 70294 / BCRC 21397 / CBS 2163 / NBRC 10782 / NRRL Y-8283 / UCD 57-17) (Kluyveromyces polysporus).